Reading from the N-terminus, the 116-residue chain is MAGLVKKTTGLVGLAVCDTPHERLTILYTKILDLLKHFPKHAAYRKYTEQITSEKLELVKLEPDVKKLENLLQGGEVEEVILQAEKELSLARKMLQWKPWEPLVEEPPANQWKWPI.

A2 bears the N-acetylalanine mark. Residues K30, K46, and K60 each carry the N6-acetyllysine modification. A Phosphoserine modification is found at S89. Residue K98 is modified to N6-acetyllysine; alternate. K98 carries the N6-succinyllysine; alternate modification.

It belongs to the complex I NDUFA5 subunit family. In terms of assembly, complex I is composed of 45 different subunits.

The protein resides in the mitochondrion inner membrane. In terms of biological role, accessory subunit of the mitochondrial membrane respiratory chain NADH dehydrogenase (Complex I), that is believed not to be involved in catalysis. Complex I functions in the transfer of electrons from NADH to the respiratory chain. The immediate electron acceptor for the enzyme is believed to be ubiquinone. In Rattus norvegicus (Rat), this protein is NADH dehydrogenase [ubiquinone] 1 alpha subcomplex subunit 5 (Ndufa5).